The sequence spans 376 residues: Cytochrome-c peroxidase IdrP1 (376 aa).

The signal sequence occupies residues 1-24; that stretch reads MGHIRSIRLALAVAAVCTAASAAA. 2 Cytochrome c domains span residues 49 to 157 and 203 to 354; these read DKVA…AAFK and AEAQ…EALS. The heme c site is built by Cys-71, Cys-74, His-75, Cys-218, Cys-221, and His-222.

The iodate reductase (Idr) complex is composed of a molybdopterin-dependent iodate reductase (IdrA and IdrB subunits) and two associated peroxidases (IdrP1 and IdrP2). Requires heme c as cofactor.

It is found in the periplasm. It carries out the reaction 2 Fe(II)-[cytochrome c] + H2O2 + 2 H(+) = 2 Fe(III)-[cytochrome c] + 2 H2O. In terms of biological role, involved in iodate respiration. May play a critical role in detoxification of inadvertent H(2)O(2) generated by the iodate reductase IdrA/IdrB. In Denitromonas iodatirespirans, this protein is Cytochrome-c peroxidase IdrP1.